The primary structure comprises 1008 residues: Collagen alpha-2(I) chain (1008 aa).

The disordered stretch occupies residues 1 to 999; it reads GGFDFSFLPQ…IRGSGGGYDF (999 aa). 4-hydroxyproline is present on residues P9, P12, P45, and P51. Low complexity predominate over residues 38–81; it reads LMGPRGPPGASGAPGPQGFPAGEPGEPGQTGPAGARGPAGPPGK. The span at 82–94 shows a compositional bias: basic and acidic residues; sequence ADGHPGKPGRPGE. K116 is subject to 5-hydroxylysine; alternate. O-linked (Gal...) hydroxylysine; alternate glycosylation occurs at K116. Composition is skewed to low complexity over residues 164–193, 239–260, and 301–314; these read VGAP…SAGP, PGAN…AGAP, and EPGS…PGSS. Gly residues predominate over residues 336-345; it reads GLRGGPGSRG. Positions 358–374 are enriched in low complexity; it reads PAGARGASGPAGVRGPS. 4-hydroxyproline is present on residues P380 and P383. Low complexity predominate over residues 409–428; that stretch reads LPGIDGRPGPIGPAGARGEA. Residues 455–466 show a composition bias toward gly residues; the sequence is GNRGQGGKGEQG. Low complexity-rich tracts occupy residues 513-530 and 542-552; these read PGES…SRGP and EPGVVGAPGTA. A compositionally biased stretch (gly residues) spans 553 to 562; the sequence is GPAGSGGLPG. Low complexity-rich tracts occupy residues 582–629 and 636–656; these read RGEV…PRGS and VGPA…QPGA. Residues 657–666 show a composition bias toward basic and acidic residues; sequence KGERGTKGPK. The span at 674–684 shows a compositional bias: low complexity; the sequence is PTGPVGSAGPA. Gly residues predominate over residues 694–703; the sequence is GSRGDGGPPG. The span at 704 to 714 shows a compositional bias: low complexity; that stretch reads ATGFPGAAGRT. Positions 751-760 are enriched in gly residues; the sequence is GETGAGGPPG. 5 stretches are compositionally biased toward low complexity: residues 768–795, 803–813, 826–842, 862–884, and 892–907; these read SGEP…LGLP, LPGVAGAVGEP, PPGA…PGNP, YAGN…VGPA, and EPGP…ALGP. Basic and acidic residues predominate over residues 917-928; that stretch reads RGDKGEPGDKGP. Positions 989–998 are enriched in gly residues; that stretch reads GIRGSGGGYD.

It belongs to the fibrillar collagen family. As to quaternary structure, trimers of one alpha 2(I) and two alpha 1(I) chains. Interacts (via C-terminus) with TMEM131 (via PapD-L domain); the interaction is direct and is involved in assembly and TRAPPIII ER-to-Golgi transport complex-dependent secretion of collagen. In terms of processing, prolines at the third position of the tripeptide repeating unit (G-X-Y) are hydroxylated in some or all of the chains. As to expression, expressed in bones.

It is found in the secreted. The protein localises to the extracellular space. It localises to the extracellular matrix. Its function is as follows. Type I collagen is a member of group I collagen (fibrillar forming collagen). The sequence is that of Collagen alpha-2(I) chain from Nothrotheriops shastensis (Shasta ground sloth).